A 91-amino-acid chain; its full sequence is Small ribosomal subunit protein uS19 (91 aa).

It belongs to the universal ribosomal protein uS19 family.

Protein S19 forms a complex with S13 that binds strongly to the 16S ribosomal RNA. In Pseudomonas fluorescens (strain Pf0-1), this protein is Small ribosomal subunit protein uS19.